The sequence spans 582 residues: 15-cis-phytoene desaturase, chloroplastic/chromoplastic (582 aa).

The transit peptide at 1–110 directs the protein to the chloroplast and chromoplast; it reads MPQIGLVSAV…FRSSPRPTKP (110 aa). FAD-binding positions include 140–141, Lys148, 165–166, and Tyr171; these read EA and HI. Arg306 contributes to the substrate binding site. 2 residues coordinate FAD: Ile348 and Asp537. Ala545 is a substrate binding site. Met547 lines the FAD pocket.

The protein belongs to the carotenoid/retinoid oxidoreductase family. As to quaternary structure, homotetramer. The cofactor is FAD.

The protein localises to the plastid. It is found in the chloroplast. It localises to the chromoplast. Its subcellular location is the membrane. It catalyses the reaction 2 a plastoquinone + 15-cis-phytoene = 9,9',15-tri-cis-zeta-carotene + 2 a plastoquinol. Its pathway is carotenoid biosynthesis; lycopene biosynthesis. Inhibited by the herbicides metflurazon, difunone, fluridone and diflufenican. Its function is as follows. Converts phytoene into zeta-carotene via the intermediary of phytofluene by the symmetrical introduction of two double bonds at the C-11 and C-11' positions of phytoene with a concomitant isomerization of two neighboring double bonds at the C9 and C9' positions from trans to cis. This is 15-cis-phytoene desaturase, chloroplastic/chromoplastic (PDS) from Capsicum annuum (Capsicum pepper).